A 236-amino-acid chain; its full sequence is Orotidine 5'-phosphate decarboxylase (236 aa).

Substrate contacts are provided by residues aspartate 11, lysine 33, 60 to 69 (DLKLHDIPNT), threonine 119, arginine 181, glutamine 190, glycine 210, and arginine 211. Residue lysine 62 is the Proton donor of the active site.

Belongs to the OMP decarboxylase family. Type 1 subfamily. As to quaternary structure, homodimer.

The catalysed reaction is orotidine 5'-phosphate + H(+) = UMP + CO2. The protein operates within pyrimidine metabolism; UMP biosynthesis via de novo pathway; UMP from orotate: step 2/2. In terms of biological role, catalyzes the decarboxylation of orotidine 5'-monophosphate (OMP) to uridine 5'-monophosphate (UMP). The sequence is that of Orotidine 5'-phosphate decarboxylase from Cutibacterium acnes (strain DSM 16379 / KPA171202) (Propionibacterium acnes).